Reading from the N-terminus, the 344-residue chain is Nuclear distribution protein nudE-like 1-A (344 aa).

Positions 26 to 187 (YKKSYKEAQE…RQELAVRDTR (162 aa)) form a coiled coil. The segment covering 181–190 (LAVRDTRSEV) has biased composition (basic and acidic residues). Disordered stretches follow at residues 181–209 (LAVRDTRSEVTRMSAPSSPTPDNDKTDSA) and 322–344 (PGDGTHITAPPRSNSPSGLVLSV).

It belongs to the nudE family. Post-translationally, phosphorylated in mitosis.

Its subcellular location is the cytoplasm. The protein resides in the cytoskeleton. The protein localises to the microtubule organizing center. It localises to the centrosome. It is found in the spindle. Required for organization of the cellular microtubule array and microtubule anchoring at the centrosome. Positively regulates the activity of the minus-end directed microtubule motor protein dynein. May enhance dynein-mediated microtubule sliding by targeting dynein to the microtubule plus end. This Danio rerio (Zebrafish) protein is Nuclear distribution protein nudE-like 1-A (ndel1a).